Here is a 90-residue protein sequence, read N- to C-terminus: Putative defensin-like protein 243 (90 aa).

The signal sequence occupies residues 1–19; it reads MKVEVIFLASCVLFSLIHA. Intrachain disulfides connect Cys33-Cys88, Cys43-Cys72, Cys53-Cys82, and Cys70-Cys84.

Belongs to the DEFL family.

Its subcellular location is the secreted. This is Putative defensin-like protein 243 (SCRL9) from Arabidopsis thaliana (Mouse-ear cress).